We begin with the raw amino-acid sequence, 67 residues long: Alpha-toxin Cn12 (67 aa).

Residues 1-66 form the LCN-type CS-alpha/beta domain; sequence RDGYPLASNG…WGDSGTGPCR (66 aa). Disulfide bonds link C11-C65, C15-C40, C25-C45, and C29-C47.

As to expression, expressed by the venom gland.

Its subcellular location is the secreted. Its function is as follows. Alpha toxins bind voltage-independently at site-3 of sodium channels (Nav) and inhibit the inactivation of the activated channels, thereby blocking neuronal transmission. This toxin binds, in vitro, to sodium channels and inhibits the inactivation of the activated channels. Seems not toxic to mice, crickets and sweet-water shrimps. The sequence is that of Alpha-toxin Cn12 from Centruroides noxius (Mexican scorpion).